A 92-amino-acid chain; its full sequence is PqqA binding protein (92 aa).

This sequence belongs to the PqqD family. Monomer. Interacts with PqqE.

Its pathway is cofactor biosynthesis; pyrroloquinoline quinone biosynthesis. Its function is as follows. Functions as a PqqA binding protein and presents PqqA to PqqE, in the pyrroloquinoline quinone (PQQ) biosynthetic pathway. The chain is PqqA binding protein from Xanthomonas euvesicatoria pv. vesicatoria (strain 85-10) (Xanthomonas campestris pv. vesicatoria).